A 424-amino-acid chain; its full sequence is Histidine--tRNA ligase (424 aa).

This sequence belongs to the class-II aminoacyl-tRNA synthetase family. As to quaternary structure, homodimer.

It is found in the cytoplasm. It carries out the reaction tRNA(His) + L-histidine + ATP = L-histidyl-tRNA(His) + AMP + diphosphate + H(+). The protein is Histidine--tRNA ligase of Bacillus licheniformis (strain ATCC 14580 / DSM 13 / JCM 2505 / CCUG 7422 / NBRC 12200 / NCIMB 9375 / NCTC 10341 / NRRL NRS-1264 / Gibson 46).